We begin with the raw amino-acid sequence, 180 residues long: MIKREDVYKIGLFNKPHGIHGELSFTFTDDIFDRADCDYLICRLDDIFVPFFIEEYRFRSDSTALVKLEGVDTAERARMFTNVEVYFPVKHAEEAGPGELSWDFFVGFRVEDVRHGALGKVTDVDTSTVNTLFVVDRDGDELLIPAQEELIAGIDQKHKIITVDLPEGLLSLDECDDEES.

One can recognise a PRC barrel domain in the interval 97 to 169 (PGELSWDFFV…IITVDLPEGL (73 aa)).

It belongs to the RimM family. In terms of assembly, binds ribosomal protein uS19.

The protein resides in the cytoplasm. Functionally, an accessory protein needed during the final step in the assembly of 30S ribosomal subunit, possibly for assembly of the head region. Essential for efficient processing of 16S rRNA. May be needed both before and after RbfA during the maturation of 16S rRNA. It has affinity for free ribosomal 30S subunits but not for 70S ribosomes. The sequence is that of Ribosome maturation factor RimM from Bacteroides fragilis (strain YCH46).